A 508-amino-acid chain; its full sequence is Maturase K (508 aa).

Belongs to the intron maturase 2 family. MatK subfamily.

It localises to the plastid. It is found in the chloroplast. Functionally, usually encoded in the trnK tRNA gene intron. Probably assists in splicing its own and other chloroplast group II introns. In Marathrum schiedeanum, this protein is Maturase K.